Reading from the N-terminus, the 74-residue chain is Anaphase-promoting complex subunit 13 (74 aa).

This sequence belongs to the APC13 family. The APC/C is composed of at least 12 subunits.

It localises to the nucleus. It functions in the pathway protein modification; protein ubiquitination. Functionally, component of the anaphase promoting complex/cyclosome (APC/C), a cell cycle-regulated E3 ubiquitin ligase that controls progression through mitosis and the G1 phase of the cell cycle. The APC/C complex acts by mediating ubiquitination and subsequent degradation of target proteins: it mainly mediates the formation of 'Lys-11'-linked polyubiquitin chains and, to a lower extent, the formation of 'Lys-48'- and 'Lys-63'-linked polyubiquitin chains. The APC/C complex catalyzes assembly of branched 'Lys-11'-/'Lys-48'-linked branched ubiquitin chains on target proteins. This is Anaphase-promoting complex subunit 13 (anapc13) from Xenopus tropicalis (Western clawed frog).